We begin with the raw amino-acid sequence, 131 residues long: Small ribosomal subunit protein uS8 (131 aa).

Belongs to the universal ribosomal protein uS8 family. Part of the 30S ribosomal subunit. Contacts proteins S5 and S12.

In terms of biological role, one of the primary rRNA binding proteins, it binds directly to 16S rRNA central domain where it helps coordinate assembly of the platform of the 30S subunit. The protein is Small ribosomal subunit protein uS8 of Wolinella succinogenes (strain ATCC 29543 / DSM 1740 / CCUG 13145 / JCM 31913 / LMG 7466 / NCTC 11488 / FDC 602W) (Vibrio succinogenes).